The primary structure comprises 301 residues: tRNA U34 carboxymethyltransferase (301 aa).

Carboxy-S-adenosyl-L-methionine is bound by residues lysine 70, tryptophan 84, lysine 89, glycine 108, 130–132 (DPS), 157–158 (VE), tyrosine 177, and arginine 292.

Belongs to the class I-like SAM-binding methyltransferase superfamily. CmoB family. As to quaternary structure, homotetramer.

It catalyses the reaction carboxy-S-adenosyl-L-methionine + 5-hydroxyuridine(34) in tRNA = 5-carboxymethoxyuridine(34) in tRNA + S-adenosyl-L-homocysteine + H(+). In terms of biological role, catalyzes carboxymethyl transfer from carboxy-S-adenosyl-L-methionine (Cx-SAM) to 5-hydroxyuridine (ho5U) to form 5-carboxymethoxyuridine (cmo5U) at position 34 in tRNAs. The sequence is that of tRNA U34 carboxymethyltransferase from Sulfurovum sp. (strain NBC37-1).